A 113-amino-acid chain; its full sequence is Nitrogenase-stabilizing/protective protein NifW (113 aa).

It belongs to the NifW family. Homotrimer; associates with NifD.

Functionally, may protect the nitrogenase Fe-Mo protein from oxidative damage. The sequence is that of Nitrogenase-stabilizing/protective protein NifW from Dechloromonas aromatica (strain RCB).